We begin with the raw amino-acid sequence, 155 residues long: Small ribosomal subunit protein uS7 (155 aa).

Belongs to the universal ribosomal protein uS7 family. In terms of assembly, part of the 30S ribosomal subunit. Contacts proteins S9 and S11.

Functionally, one of the primary rRNA binding proteins, it binds directly to 16S rRNA where it nucleates assembly of the head domain of the 30S subunit. Is located at the subunit interface close to the decoding center, probably blocks exit of the E-site tRNA. The polypeptide is Small ribosomal subunit protein uS7 (Xylella fastidiosa (strain M12)).